A 556-amino-acid polypeptide reads, in one-letter code: U3 small nucleolar RNA-associated protein 18 homolog (556 aa).

Over residues 1–24 (MPPERRRRMKLDRRTGAKPKRKPG) the composition is skewed to basic residues. The tract at residues 1–70 (MPPERRRRMK…IAVAAAEEER (70 aa)) is disordered. Positions 43 to 65 (APSSQRKPPARPSAAAAAIAVAA) are enriched in low complexity. Lys84 participates in a covalent cross-link: Glycyl lysine isopeptide (Lys-Gly) (interchain with G-Cter in SUMO2). The disordered stretch occupies residues 111–143 (RGPRVQEHEDSGDSEVENEAKGNFPPQKKPVWV). Ser121 and Ser124 each carry phosphoserine. Residues Lys183 and Lys201 each participate in a glycyl lysine isopeptide (Lys-Gly) (interchain with G-Cter in SUMO2) cross-link. A disordered region spans residues 193–219 (VPAWAETTKRKTSSDDESEEDEDDLLQ). Phosphothreonine is present on Thr204. A phosphoserine mark is found at Ser205, Ser206, and Ser210. Acidic residues predominate over residues 207 to 216 (DDESEEDEDD). Thr221 is modified (phosphothreonine). WD repeat units lie at residues 249–288 (PTVARISSVQFHPGAQIVMVAGLDNAVSLFQVDGKTNPKI), 293–333 (LERF…LIPV), 339–380 (LKEK…GSMK), 381–419 (INGRVAASTFSSDSKKVYASSGDGEVYVWDVNSRKCLNR), 421–462 (VDEG…QETN), and 471–512 (NLVT…VFSN). A Glycyl lysine isopeptide (Lys-Gly) (interchain with G-Cter in SUMO2) cross-link involves residue Lys517.

Belongs to the WD repeat UTP18 family. Part of the small subunit (SSU) processome, composed of more than 70 proteins and the RNA chaperone small nucleolar RNA (snoRNA) U3.

Its subcellular location is the nucleus. It is found in the nucleolus. Functionally, part of the small subunit (SSU) processome, first precursor of the small eukaryotic ribosomal subunit. During the assembly of the SSU processome in the nucleolus, many ribosome biogenesis factors, an RNA chaperone and ribosomal proteins associate with the nascent pre-rRNA and work in concert to generate RNA folding, modifications, rearrangements and cleavage as well as targeted degradation of pre-ribosomal RNA by the RNA exosome. Involved in nucleolar processing of pre-18S ribosomal RNA. This Homo sapiens (Human) protein is U3 small nucleolar RNA-associated protein 18 homolog.